Reading from the N-terminus, the 193-residue chain is Interleukin-18 (193 aa).

The propeptide occupies 1–36 (MAAEPVEDNCINFVAMKFIDNTLYFIAEDDENLESD).

It belongs to the IL-1 family. In terms of assembly, forms a ternary complex with ligand-binding receptor subunit IL18R1 and signaling receptor subunit IL18RAP at the plasma membrane. Mature IL18 first binds to IL18R1 forming a low affinity binary complex, which then interacts with IL18RAP to form a high affinity ternary complex that signals inside the cell. Interacts with cargo receptor TMED10; the interaction mediates the translocation from the cytoplasm into the ERGIC (endoplasmic reticulum-Golgi intermediate compartment) and thereby secretion. In terms of processing, the pro-IL-18 precursor is processed by CASP1, CASP4 or CASP5 to yield its mature, active form. The pro-IL-18 precursor features autoinhibitory interactions between the propeptide and the post-cleavage-site region, preventing recognition by the IL18R1 receptor. Processing by CASP1, CASP4 or CASP5 induces conformational changes to generate critical receptor-binding sites. The mature form is then secreted and released in the extracellular milieu by passing through the gasdermin-D (GSDMD) pore. In contrast, cleavage by CASP3 inactivates IL18. As to expression, expressed in ovarian carcinoma but undetectable in normal ovarian epithelial cells. Resistant to proteolytic activation by caspase-1 and -4.

It localises to the cytoplasm. The protein resides in the cytosol. Its subcellular location is the secreted. In terms of biological role, pro-inflammatory cytokine primarily involved in epithelial barrier repair, polarized T-helper 1 (Th1) cell and natural killer (NK) cell immune responses. Upon binding to IL18R1 and IL18RAP, forms a signaling ternary complex which activates NF-kappa-B, triggering synthesis of inflammatory mediators. Synergizes with IL12/interleukin-12 to induce IFNG synthesis from T-helper 1 (Th1) cells and natural killer (NK) cells. Involved in transduction of inflammation downstream of pyroptosis: its mature form is specifically released in the extracellular milieu by passing through the gasdermin-D (GSDMD) pore. The protein is Interleukin-18 of Homo sapiens (Human).